The chain runs to 683 residues: MSAQDFLVELGTEELPPKALATLGDAFLAGIEKGLQAAGLNYTGKQVYAAPRRLAVLIRQLDVQQPDRSINIDGPPLQAAFKDGEPTQAALGFAKKCGVELSEIDQSGAKLRFSQHIPGKATASLLPTIVEDSLNDLPIPKRMRWAASREEFVRPTQWLVMLLGDQVVDCTILSQQAGRESRGHRFHHPQNVVITTPANYVEDLRKAYVLADFAERRELIAKRTTELAMQQEGTAIVPPALLDEVTALVEWPVPLVCSFEERFLEVPQEALITTMQDNQKYFCLLDSEGKLLPRFITVANVESRDPKQIVSGNEKVVRPRLTDAEFFFKQDKKQPLETFNERLKNVVFQAQLGTVYDKAERVSRLAAYIAPLIGGDAQRAGRAGLLSKCDLATEMVGEFPEMQGVAGYYYALNDGEPQDVALALNEQYMPRGAGAELPQTLTGAAVAIADKLDTLVGIFGIGMLPTGSKDPYALRRAALGVLRILIEKQLDLDLTPAVEFAVKQFGAKVKAAGLAEQVLEFIFDRLRARYEDEGIDVATYLSVRALKPGSALDFDQRVQAVQAFRKLPEAEALAAVNKRVSNLLSKAEGAIAEQVEPKYFDNANEFSLYSAIQQADQAVQPMAAARQYSESLARLAALRDPVDAFFEAVMVNAEDAKVRANRYALLSRLRGLFLGVADISLLG.

It belongs to the class-II aminoacyl-tRNA synthetase family. As to quaternary structure, tetramer of two alpha and two beta subunits.

It is found in the cytoplasm. It catalyses the reaction tRNA(Gly) + glycine + ATP = glycyl-tRNA(Gly) + AMP + diphosphate. This is Glycine--tRNA ligase beta subunit from Pseudomonas putida (strain W619).